The following is a 553-amino-acid chain: MYRVKSESDCEMIHQEQMDSPVADDGSSGGSPHRGGGPPLKKGPWTSAEDAILVDYVKKHGEGNWNAVQKNTGLFRCGKSCRLRWANHLRPNLKKGAFTAEEERLIIQLHSKMGNKWARMAAHLPGRTDNEIKNYWNTRIKRCQRAGLPIYPTSVCNQSSNEDQQCSSDFDCGENLSNDLLNANGLYLPDFTCDNFIANSEALPYAPHLSAVSISNLLGQSFASKSCSFMDQVNQTGMLKQSDGVLPGLSDTINGVISSVDQFSNDSEKLKQAVGFDYLHEANSTSKIIAPFGGALNGSHAFLNGNFSASRPTSGPLKMELPSLQDTESDPNSWLKYTVAPALQPTELVDPYLQSPAATPSVKSECASPRNSGLLEELVHEAQTLRSGKNQQTSVISSSSSVGTPCNTTVLSPEFDMCQEYWEEQHPGPFLNDCAPFSGNSFTESTPPVSAASPDIFQLSKVSPAQSTSMGSGEQVMGPKYEPGDTSPHPENFRPDALFSGNTADPSVFNNAIAMLLGNDLSIDCRPVLGDGIMFNSSSWSNMPHACEMSEFK.

Residues 1 to 17 (MYRVKSESDCEMIHQEQ) show a composition bias toward basic and acidic residues. The interval 1-45 (MYRVKSESDCEMIHQEQMDSPVADDGSSGGSPHRGGGPPLKKGPW) is disordered. Over residues 27-38 (SSGGSPHRGGGP) the composition is skewed to gly residues. HTH myb-type domains follow at residues 37–89 (GPPL…ANHL) and 90–144 (RPNL…KRCQ). DNA-binding regions (H-T-H motif) lie at residues 65-89 (WNAV…ANHL) and 117-140 (WARM…NTRI). Residues 464–488 (PAQSTSMGSGEQVMGPKYEPGDTSP) form a disordered region.

It is found in the nucleus. In terms of biological role, transcriptional activator of gibberellin-dependent alpha-amylase expression in aleurone cells. Involved in pollen and floral organs development. May bind to the 5'-TAACAAA-3' box of alpha-amylase promoter. The protein is Transcription factor GAMYB (GAM1) of Oryza sativa subsp. indica (Rice).